Reading from the N-terminus, the 250-residue chain is Ribonuclease PH (250 aa).

Phosphate is bound by residues Arg99 and 137 to 139 (GTR).

It belongs to the RNase PH family. As to quaternary structure, homohexameric ring arranged as a trimer of dimers.

The catalysed reaction is tRNA(n+1) + phosphate = tRNA(n) + a ribonucleoside 5'-diphosphate. In terms of biological role, phosphorolytic 3'-5' exoribonuclease that plays an important role in tRNA 3'-end maturation. Removes nucleotide residues following the 3'-CCA terminus of tRNAs; can also add nucleotides to the ends of RNA molecules by using nucleoside diphosphates as substrates, but this may not be physiologically important. Probably plays a role in initiation of 16S rRNA degradation (leading to ribosome degradation) during starvation. In Bordetella parapertussis (strain 12822 / ATCC BAA-587 / NCTC 13253), this protein is Ribonuclease PH.